Consider the following 217-residue polypeptide: GTP cyclohydrolase 1 (217 aa).

Positions 109, 112, and 180 each coordinate Zn(2+).

It belongs to the GTP cyclohydrolase I family. In terms of assembly, toroid-shaped homodecamer, composed of two pentamers of five dimers.

The catalysed reaction is GTP + H2O = 7,8-dihydroneopterin 3'-triphosphate + formate + H(+). It participates in cofactor biosynthesis; 7,8-dihydroneopterin triphosphate biosynthesis; 7,8-dihydroneopterin triphosphate from GTP: step 1/1. The sequence is that of GTP cyclohydrolase 1 from Photobacterium profundum (strain SS9).